Consider the following 540-residue polypeptide: Ubiquitin carboxyl-terminal hydrolase 17-like protein E (540 aa).

The tract at residues 1-22 (MVVSLSFPEETGGENLPSAPLE) is disordered. Positions 85–382 (CGLQNTGNSC…NAYVLFYVQQ (298 aa)) constitute a USP domain. Cysteine 94 acts as the Nucleophile in catalysis. Residue histidine 341 is the Proton acceptor of the active site. 2 stretches are compositionally biased toward basic and acidic residues: residues 431 to 441 (NREKRAKKETS) and 508 to 520 (APDK…HNGD). Disordered regions lie at residues 431–461 (NREK…QKHG) and 499–540 (RSTA…QGGR). Polar residues predominate over residues 523–540 (LTSQGLMSPGQLCSQGGR).

It belongs to the peptidase C19 family. USP17 subfamily. Interacts with SUDS3; the interaction is direct.

The protein localises to the nucleus. The protein resides in the endoplasmic reticulum. The enzyme catalyses Thiol-dependent hydrolysis of ester, thioester, amide, peptide and isopeptide bonds formed by the C-terminal Gly of ubiquitin (a 76-residue protein attached to proteins as an intracellular targeting signal).. Functionally, deubiquitinating enzyme that removes conjugated ubiquitin from specific proteins to regulate different cellular processes that may include cell proliferation, progression through the cell cycle, apoptosis, cell migration, and the cellular response to viral infection. This chain is Ubiquitin carboxyl-terminal hydrolase 17-like protein E (Usp17le), found in Mus musculus (Mouse).